Consider the following 101-residue polypeptide: NADH-quinone oxidoreductase subunit K (101 aa).

Helical transmembrane passes span L4–L24, I30–F50, and F65–F85.

It belongs to the complex I subunit 4L family. NDH-1 is composed of 14 different subunits. Subunits NuoA, H, J, K, L, M, N constitute the membrane sector of the complex.

It is found in the cell inner membrane. It catalyses the reaction a quinone + NADH + 5 H(+)(in) = a quinol + NAD(+) + 4 H(+)(out). Functionally, NDH-1 shuttles electrons from NADH, via FMN and iron-sulfur (Fe-S) centers, to quinones in the respiratory chain. The immediate electron acceptor for the enzyme in this species is believed to be ubiquinone. Couples the redox reaction to proton translocation (for every two electrons transferred, four hydrogen ions are translocated across the cytoplasmic membrane), and thus conserves the redox energy in a proton gradient. The protein is NADH-quinone oxidoreductase subunit K of Cereibacter sphaeroides (strain ATCC 17029 / ATH 2.4.9) (Rhodobacter sphaeroides).